Reading from the N-terminus, the 638-residue chain is Factor of DNA methylation 3 (638 aa).

Residues 318-497 (FNRIFADHEK…RALISNLRDM (180 aa)) are a coiled coil.

Functionally, acts in association with FDM4 and FDM5 for RNA-directed DNA methylation (RdDM). The chain is Factor of DNA methylation 3 from Arabidopsis thaliana (Mouse-ear cress).